The primary structure comprises 274 residues: 4-hydroxy-tetrahydrodipicolinate reductase (274 aa).

12 to 17 (GAAGRM) is an NAD(+) binding site. R39 is an NADP(+) binding site. NAD(+) is bound by residues 102 to 104 (GTT) and 126 to 129 (SGNM). The active-site Proton donor/acceptor is the H160. H161 contributes to the (S)-2,3,4,5-tetrahydrodipicolinate binding site. K164 (proton donor) is an active-site residue. 170-171 (GT) lines the (S)-2,3,4,5-tetrahydrodipicolinate pocket.

Belongs to the DapB family.

The protein localises to the cytoplasm. The enzyme catalyses (S)-2,3,4,5-tetrahydrodipicolinate + NAD(+) + H2O = (2S,4S)-4-hydroxy-2,3,4,5-tetrahydrodipicolinate + NADH + H(+). The catalysed reaction is (S)-2,3,4,5-tetrahydrodipicolinate + NADP(+) + H2O = (2S,4S)-4-hydroxy-2,3,4,5-tetrahydrodipicolinate + NADPH + H(+). It functions in the pathway amino-acid biosynthesis; L-lysine biosynthesis via DAP pathway; (S)-tetrahydrodipicolinate from L-aspartate: step 4/4. Its function is as follows. Catalyzes the conversion of 4-hydroxy-tetrahydrodipicolinate (HTPA) to tetrahydrodipicolinate. The polypeptide is 4-hydroxy-tetrahydrodipicolinate reductase (Rhizobium rhizogenes (strain K84 / ATCC BAA-868) (Agrobacterium radiobacter)).